We begin with the raw amino-acid sequence, 1761 residues long: Laminin subunit beta-4 (1761 aa).

The first 19 residues, 1 to 19, serve as a signal peptide directing secretion; that stretch reads MQFQLTLFLHLGWLSYSKA. A Laminin N-terminal domain is found at 24 to 264; that stretch reads NRGACHPTTG…ALYEMIVRGS (241 aa). N-linked (GlcNAc...) asparagine glycosylation is found at asparagine 169, asparagine 229, and asparagine 246. 19 cysteine pairs are disulfide-bonded: cysteine 265–cysteine 274, cysteine 267–cysteine 295, cysteine 297–cysteine 306, cysteine 309–cysteine 329, cysteine 332–cysteine 341, cysteine 334–cysteine 359, cysteine 362–cysteine 371, cysteine 374–cysteine 392, cysteine 395–cysteine 408, cysteine 397–cysteine 423, cysteine 425–cysteine 434, cysteine 437–cysteine 452, cysteine 455–cysteine 468, cysteine 457–cysteine 475, cysteine 477–cysteine 486, cysteine 489–cysteine 503, cysteine 506–cysteine 518, cysteine 508–cysteine 525, and cysteine 527–cysteine 536. 4 Laminin EGF-like domains span residues 265–331, 332–394, 395–454, and 455–505; these read CFCN…ACRS, CSCN…ACIP, CECD…GCQP, and CDCN…GCSP. Positions 506–552 constitute a Laminin EGF-like 5; truncated domain; the sequence is CDCDIGGAYSNVCSPKNGQCECRPHVTGRSCSEPAPGYFFAPLNFYL. Positions 545–763 constitute a Laminin IV type B domain; it reads FAPLNFYLYE…LIISMSAKLH (219 aa). Intrachain disulfides connect cysteine 769–cysteine 781, cysteine 771–cysteine 788, cysteine 790–cysteine 799, cysteine 802–cysteine 814, cysteine 817–cysteine 829, cysteine 819–cysteine 836, cysteine 838–cysteine 847, cysteine 850–cysteine 860, cysteine 863–cysteine 872, cysteine 865–cysteine 879, cysteine 882–cysteine 891, cysteine 894–cysteine 908, cysteine 913–cysteine 938, cysteine 940–cysteine 949, cysteine 952–cysteine 967, cysteine 970–cysteine 984, cysteine 972–cysteine 991, cysteine 994–cysteine 1003, cysteine 1006–cysteine 1019, cysteine 1022–cysteine 1043, cysteine 1024–cysteine 1050, cysteine 1052–cysteine 1061, cysteine 1064–cysteine 1077, cysteine 1080–cysteine 1092, cysteine 1082–cysteine 1099, cysteine 1101–cysteine 1110, cysteine 1113–cysteine 1125, cysteine 1128–cysteine 1140, cysteine 1130–cysteine 1147, cysteine 1149–cysteine 1158, and cysteine 1161–cysteine 1172. Laminin EGF-like domains lie at 769–816, 817–862, 863–910, 911–969, 970–1021, 1022–1079, 1080–1127, and 1128–1174; these read CKCH…GCHP, CHCH…SCHP, CPCN…PCRP, CLCP…PCQP, CACN…TCRR, CSCH…GCQS, CDCD…RCIP, and CDCN…TCLQ. N-linked (GlcNAc...) asparagine glycosylation occurs at asparagine 1016. Asparagine 1055 carries an N-linked (GlcNAc...) asparagine glycan. The domain II stretch occupies residues 1175–1375; sequence CHLCFDQWDH…PDIQILNEKV (201 aa). N-linked (GlcNAc...) asparagine glycans are attached at residues asparagine 1223, asparagine 1301, asparagine 1326, asparagine 1333, and asparagine 1354. Residues 1243–1301 are a coiled coil; it reads KVKDYHDSVRRQIMQLNEQLKAVYEFQDLKDTIERAKNEADLLLEDLQEEIDLQSSVLN. Residues 1376-1408 form a domain alpha region; sequence CGDPGNVPCVPLPCGGALCTGRKGHRKCRGPGC. Positions 1409 to 1761 are domain I; that stretch reads HGSLTLSTNA…QEKKYARCYS (353 aa). A coiled-coil region spans residues 1416 to 1480; it reads TNALQKAQEA…SDSEEENINL (65 aa). 6 N-linked (GlcNAc...) asparagine glycosylation sites follow: asparagine 1469, asparagine 1517, asparagine 1587, asparagine 1596, asparagine 1609, and asparagine 1725. Residues 1525–1759 adopt a coiled-coil conformation; that stretch reads IQKHMQLCED…VEQEKKYARC (235 aa).

Laminin is a complex glycoprotein, consisting of three different polypeptide chains (alpha, beta, gamma), which are bound to each other by disulfide bonds into a cross-shaped molecule comprising one long and three short arms with globules at each end.

The protein localises to the secreted. It is found in the extracellular space. Its subcellular location is the extracellular matrix. It localises to the basement membrane. Its function is as follows. Binding to cells via a high affinity receptor, laminin is thought to mediate the attachment, migration and organization of cells into tissues during embryonic development by interacting with other extracellular matrix components. The protein is Laminin subunit beta-4 (LAMB4) of Homo sapiens (Human).